Reading from the N-terminus, the 681-residue chain is DNA ligase (681 aa).

NAD(+) contacts are provided by residues 45–49 (DFDFD), 94–95 (SL), and Glu-120. Lys-122 functions as the N6-AMP-lysine intermediate in the catalytic mechanism. Residues Arg-143, Glu-177, Lys-289, and Lys-313 each contribute to the NAD(+) site. Residues Cys-403, Cys-406, Cys-421, and Cys-426 each coordinate Zn(2+). Residues 593 to 681 (SDQQPFAGQS…SLKINFKNTI (89 aa)) enclose the BRCT domain.

This sequence belongs to the NAD-dependent DNA ligase family. LigA subfamily. The cofactor is Mg(2+). Requires Mn(2+) as cofactor.

The catalysed reaction is NAD(+) + (deoxyribonucleotide)n-3'-hydroxyl + 5'-phospho-(deoxyribonucleotide)m = (deoxyribonucleotide)n+m + AMP + beta-nicotinamide D-nucleotide.. DNA ligase that catalyzes the formation of phosphodiester linkages between 5'-phosphoryl and 3'-hydroxyl groups in double-stranded DNA using NAD as a coenzyme and as the energy source for the reaction. It is essential for DNA replication and repair of damaged DNA. The protein is DNA ligase of Leptospira borgpetersenii serovar Hardjo-bovis (strain L550).